Here is a 217-residue protein sequence, read N- to C-terminus: Uracil-DNA glycosylase (217 aa).

Asp62 functions as the Proton acceptor in the catalytic mechanism.

This sequence belongs to the uracil-DNA glycosylase (UDG) superfamily. UNG family.

Its subcellular location is the cytoplasm. It catalyses the reaction Hydrolyzes single-stranded DNA or mismatched double-stranded DNA and polynucleotides, releasing free uracil.. Excises uracil residues from the DNA which can arise as a result of misincorporation of dUMP residues by DNA polymerase or due to deamination of cytosine. The polypeptide is Uracil-DNA glycosylase (Streptococcus pyogenes serotype M3 (strain ATCC BAA-595 / MGAS315)).